The following is a 1372-amino-acid chain: Polysaccharide lyase 8 family protein HylA (1372 aa).

The signal sequence occupies residues 1 to 25 (MIKKIIVVVAFMLTGFSLTAMSASA). The F5/8 type C domain maps to 63-172 (DGDETTRWSA…SIISFEAYEK (110 aa)). Residues 183–242 (TENLTISEKRKQQLAFEVSPAGVDITEDQIEWSSSDPTIVTVDQTGNLTAVKSGEAKVTV) enclose the BIG2 domain. Catalysis depends on residues histidine 487, tyrosine 496, and arginine 550. FIVAR domains lie at 1014–1075 (KEAL…VKQL), 1084–1146 (DKTN…VKQL), 1155–1217 (DKTN…VKQL), and 1226–1288 (DKTN…VKRL). A disordered region spans residues 1288 to 1336 (LTLKNSGENKKEQKNGGNNGHLNTSTGVDQTGTKQVKPSSQGGFRKASQ). Residues 1308–1329 (HLNTSTGVDQTGTKQVKPSSQG) show a composition bias toward polar residues. The short motif at 1338 to 1342 (LPSTG) is the LPXTG sorting signal element. The residue at position 1341 (threonine 1341) is a Pentaglycyl murein peptidoglycan amidated threonine. A propeptide spans 1342–1372 (GEKKSIALVIIGLLVIASGCLLVFRKSKSKK) (removed by sortase).

Belongs to the polysaccharide lyase 8 family.

It is found in the secreted. The protein resides in the cell wall. Has a very modest degradation activity against heparin sodium salt (HS) in vitro. Involved in the pathogenesis of vancomycin-resistant E.faecalis infections. The sequence is that of Polysaccharide lyase 8 family protein HylA from Enterococcus faecalis (strain ATCC 700802 / V583).